Consider the following 534-residue polypeptide: Glycerol kinase 5 (534 aa).

ATP-binding residues include Ser33 and Thr34. Residues Arg103, Asp280, and Gln281 each coordinate glycerol. Thr302, Gly345, and Gly445 together coordinate ATP.

It belongs to the FGGY kinase family. In terms of tissue distribution, expressed predominantly in sebaceous glands.

The protein localises to the cytoplasm. It carries out the reaction glycerol + ATP = sn-glycerol 3-phosphate + ADP + H(+). It functions in the pathway polyol metabolism; glycerol degradation via glycerol kinase pathway; sn-glycerol 3-phosphate from glycerol: step 1/1. Its function is as follows. Skin-specific kinase that plays a key role in glycerol metabolism, catalyzing its phosphorylation to produce sn-glycerol 3-phosphate. Involved in skin-specific regulation of sterol regulatory element-binding protein (SREBP) processing and lipid biosynthesis. The polypeptide is Glycerol kinase 5 (Gk5) (Mus musculus (Mouse)).